The following is a 1637-amino-acid chain: Stress response protein NST1 (1637 aa).

Polar residues predominate over residues 1-17 (MSNRGNLNLNLPPSSGK). Disordered regions lie at residues 1–155 (MSNR…EITN), 221–252 (HQAS…HASH), 442–494 (LKMN…SQQL), 504–523 (KNNL…PLQH), 681–734 (KTPY…EIDD), 746–825 (QHHH…EEEK), 871–1036 (AKRE…SKHV), 1049–1075 (SKQN…EENP), 1176–1299 (NSSQ…GAII), and 1512–1534 (YTQQ…QYPL). Positions 24–33 (VHFELSKEKN) are enriched in basic and acidic residues. Low complexity-rich tracts occupy residues 34–53 (NSTN…SNNT) and 64–113 (NDNN…QQQS). The segment covering 124–134 (AKKRKKKKSKK) has biased composition (basic residues). Positions 135–155 (SSNNNGNNSNTNSNSNSEITN) are enriched in low complexity. Positions 446–470 (QRQQSQSQSQSQSQQQRDVQTAQSQ) are enriched in low complexity. Residues 471–487 (VLSKDSSLKNANTSMNK) show a composition bias toward polar residues. Residues 692-706 (PAATSQDREQQVQPN) show a composition bias toward polar residues. Residues 717–734 (DHEHEHEHEHEHEHEIDD) show a composition bias toward basic and acidic residues. The segment covering 754–808 (EEYDEEDEEDDEEYEYGDDEEEEDEEDEEEGEDEELEEVVEDDVDEEILDDEEEF) has biased composition (acidic residues). A coiled-coil region spans residues 855 to 1023 (KDNTRKLFEE…KQLEKEAAVS (169 aa)). Composition is skewed to basic and acidic residues over residues 871-887 (AKRE…EKAK) and 896-1021 (AKEE…KEAA). Residues 1049-1063 (SKQNQAQNGNQSHLP) are compositionally biased toward polar residues. Over residues 1176-1199 (NSSQGSPWTTNSTLSSNLGSTGLS) the composition is skewed to low complexity. Polar residues predominate over residues 1201–1228 (GQGQTVSGVNTNLPSSIGITSGGASQIF). Residues 1234 to 1257 (PQLQPHQPQQQQQQQQQQQQQQQQ) are compositionally biased toward low complexity. A compositionally biased stretch (polar residues) spans 1258–1267 (NYFSPFNSFS). Low complexity-rich tracts occupy residues 1282 to 1299 (TTNI…GAII) and 1514 to 1534 (QQQQ…QYPL).

The protein belongs to the NST1 family.

The protein localises to the cytoplasm. May act as a negative regulator of salt tolerance. The polypeptide is Stress response protein NST1 (NST1) (Lodderomyces elongisporus (strain ATCC 11503 / CBS 2605 / JCM 1781 / NBRC 1676 / NRRL YB-4239) (Yeast)).